A 390-amino-acid chain; its full sequence is Na(+)/H(+) antiporter NhaA 2 (390 aa).

11 consecutive transmembrane segments (helical) span residues 23–43 (IVLI…LAAA), 63–83 (LHLW…GLEI), 100–120 (LPVL…LAIT), 129–149 (GWAI…ALVG), 158–178 (LFLL…IALF), 181–201 (SGLK…LVLV), 208–228 (ALLP…HSGI), 265–285 (GFVI…GADF), 293–313 (LGIA…SILV), 331–351 (LWGI…IAGL), and 362–382 (EAKL…LLVL).

Belongs to the NhaA Na(+)/H(+) (TC 2.A.33) antiporter family.

It localises to the cell inner membrane. The enzyme catalyses Na(+)(in) + 2 H(+)(out) = Na(+)(out) + 2 H(+)(in). Na(+)/H(+) antiporter that extrudes sodium in exchange for external protons. The polypeptide is Na(+)/H(+) antiporter NhaA 2 (Novosphingobium aromaticivorans (strain ATCC 700278 / DSM 12444 / CCUG 56034 / CIP 105152 / NBRC 16084 / F199)).